Consider the following 153-residue polypeptide: Small ribosomal subunit protein bS16 (153 aa).

Positions 114–153 (ENEPVGEAITPKKKKAKAEDAEAAADAPAEAAAESEAADK) are disordered. Low complexity predominate over residues 137–153 (AADAPAEAAAESEAADK).

Belongs to the bacterial ribosomal protein bS16 family.

This chain is Small ribosomal subunit protein bS16, found in Rhodococcus opacus (strain B4).